The sequence spans 452 residues: Sodium-coupled neutral amino acid transporter 7 (452 aa).

11 helical membrane-spanning segments follow: residues Ala46–Phe66, Ala74–Ala94, Leu120–Ile140, Phe168–Ser188, Phe195–Pro215, Val234–Gly256, Ile272–Phe292, Ile309–Leu329, Val361–Ile381, Ile385–Ile405, and Ser419–Gly439.

The protein belongs to the amino acid/polyamine transporter 2 family.

The protein localises to the lysosome membrane. The protein resides in the cell projection. It is found in the axon. It carries out the reaction L-asparagine(in) + Na(+)(in) = L-asparagine(out) + Na(+)(out). It catalyses the reaction L-glutamine(in) + Na(+)(in) = L-glutamine(out) + Na(+)(out). In terms of biological role, symporter that selectively cotransports sodium ions and amino acids, such as L-glutamine and L-asparagine from the lysosome into the cytoplasm and may participates in mTORC1 activation. The transport activity requires an acidic lysosomal lumen. The chain is Sodium-coupled neutral amino acid transporter 7 from Xenopus laevis (African clawed frog).